The sequence spans 527 residues: Arginine--tRNA ligase (527 aa).

A 'HIGH' region motif is present at residues 112–122 (ANPTGPLHIGH).

The protein belongs to the class-I aminoacyl-tRNA synthetase family. As to quaternary structure, monomer.

The protein localises to the cytoplasm. It carries out the reaction tRNA(Arg) + L-arginine + ATP = L-arginyl-tRNA(Arg) + AMP + diphosphate. The chain is Arginine--tRNA ligase from Nitratiruptor sp. (strain SB155-2).